Here is a 141-residue protein sequence, read N- to C-terminus: Hemoglobin subunit alpha (141 aa).

One can recognise a Globin domain in the interval 1–141 (VLSPADKTNI…VSTVLTSKYR (141 aa)). S3 is subject to Phosphoserine. The residue at position 7 (K7) is an N6-succinyllysine. T8 carries the phosphothreonine modification. An N6-succinyllysine modification is found at K11. Position 16 is an N6-acetyllysine; alternate (K16). The residue at position 16 (K16) is an N6-succinyllysine; alternate. The residue at position 24 (Y24) is a Phosphotyrosine. A Phosphoserine modification is found at S35. K40 carries the post-translational modification N6-succinyllysine. S49 carries the post-translational modification Phosphoserine. Residue H58 coordinates O2. H87 serves as a coordination point for heme b. Phosphoserine is present on S102. T108 is modified (phosphothreonine). A Phosphoserine modification is found at S124. Phosphothreonine occurs at positions 134 and 137. S138 bears the Phosphoserine mark.

This sequence belongs to the globin family. In terms of assembly, heterotetramer of two alpha chains and two beta chains. Red blood cells.

Functionally, involved in oxygen transport from the lung to the various peripheral tissues. Hemopressin acts as an antagonist peptide of the cannabinoid receptor CNR1. Hemopressin-binding efficiently blocks cannabinoid receptor CNR1 and subsequent signaling. This chain is Hemoglobin subunit alpha (HBA), found in Canis lupus familiaris (Dog).